The sequence spans 372 residues: B2 bradykinin receptor (372 aa).

Residues 1–34 are Extracellular-facing; the sequence is MFNITSQVSALNATLAQGNSCLDAEWWSWLNTIQ. 2 N-linked (GlcNAc...) asparagine glycosylation sites follow: Asn-3 and Asn-12. The chain crosses the membrane as a helical span at residues 35–58; the sequence is APFLWVLFVLAVLENIFVLSVFFL. The Cytoplasmic portion of the chain corresponds to 59 to 67; sequence HKSSCTVAE. Residues 68-92 form a helical membrane-spanning segment; it reads IYLGNLAVADLILAFGLPFWAITIA. The Extracellular segment spans residues 93-105; the sequence is NNFDWLFGEVLCR. Cysteines 104 and 185 form a disulfide. The helical transmembrane segment at 106–127 threads the bilayer; that stretch reads MVNTMIQMNMYSSICFLMLVSI. The Cytoplasmic segment spans residues 128-149; that stretch reads DRYLALVKTMSMGRMRGVRWAK. Tyr-130 carries the phosphotyrosine modification. Residues 150-172 traverse the membrane as a helical segment; that stretch reads LYSLVIWGCALLLSSPMLVFRTM. At 173–195 the chain is on the extracellular side; sequence KDYRDEGHNVTACLIIYPSLTWQ. N-linked (GlcNAc...) asparagine glycosylation occurs at Asn-181. The helical transmembrane segment at 196 to 222 threads the bilayer; the sequence is VFTNVLLNLVGFLLPLSIITFCTVQIM. Residues 223–241 lie on the Cytoplasmic side of the membrane; the sequence is QVLRNNEMQKFKEIQTERR. A helical transmembrane segment spans residues 242–266; the sequence is ATVLVLAVLLLFVVCWLPFQIGTFL. At 267–284 the chain is on the extracellular side; that stretch reads DTLRLLGFLPGCWEHVID. The chain crosses the membrane as a helical span at residues 285-308; the sequence is LITQISSYLAYSNSCLNPLVYVIV. The Cytoplasmic portion of the chain corresponds to 309 to 364; sequence GKRFRKKSREVYHGLCRSGGCVSEPAQSENSMGTLRTSISVDRQIHKLQDWARSSS. Phosphotyrosine is present on Tyr-320. Cys-324 carries S-palmitoyl cysteine lipidation. A Phosphoserine modification is found at Ser-339. A Phosphothreonine modification is found at Thr-342. 2 positions are modified to phosphoserine; by GRK6: Ser-346 and Ser-348.

This sequence belongs to the G-protein coupled receptor 1 family. Bradykinin receptor subfamily. BDKRB2 sub-subfamily. As to quaternary structure, forms a complex with PECAM1 and GNAQ. Interacts with PECAM1.

It localises to the cell membrane. Receptor for bradykinin. It is associated with G proteins that activate a phosphatidylinositol-calcium second messenger system. The protein is B2 bradykinin receptor (BDKRB2) of Cavia porcellus (Guinea pig).